We begin with the raw amino-acid sequence, 585 residues long: Nucleus accumbens-associated protein 2 (585 aa).

One can recognise a BTB domain in the interval 30 to 94; it reads CDVSIVVKGQ…CYTGKLTMAA (65 aa). Glycyl lysine isopeptide (Lys-Gly) (interchain with G-Cter in SUMO2) cross-links involve residues Lys-171 and Lys-215. The segment covering 238 to 261 has biased composition (polar residues); it reads PYPQGERTSPGASSLPTTDSSTSY. The interval 238-269 is disordered; sequence PYPQGERTSPGASSLPTTDSSTSYHNEDEDDD. Glycyl lysine isopeptide (Lys-Gly) (interchain with G-Cter in SUMO2) cross-links involve residues Lys-296, Lys-426, and Lys-453. The region spanning 348 to 445 is the BEN domain; that stretch reads GSGVYITRGQ…DMCTNARRVR (98 aa). Positions 541–585 are disordered; the sequence is APEQLPADGQSSPQAFEQGNTSSSRPQTPVATATRRPEGTYAGTL. A compositionally biased stretch (polar residues) spans 549–571; that stretch reads GQSSPQAFEQGNTSSSRPQTPVA.

In terms of assembly, homooligomer; mediated by the BTB domain. Interacts with the NuRD complex. Interacts (via C-terminal part) with HDAC2. Interacts (via BTB domain) with MTA1, MTA2 and MTA3.

The protein localises to the nucleus. Its function is as follows. Functions as a transcriptional repressor through its association with the NuRD complex. Recruits the NuRD complex to the promoter of MDM2, leading to the repression of MDM2 transcription and subsequent stability of p53/TP53. This chain is Nucleus accumbens-associated protein 2 (Nacc2), found in Rattus norvegicus (Rat).